A 174-amino-acid chain; its full sequence is MANRNDSRRDSRKDRKKDDIEDQLVAINRITKVVKGGRRMRFAAVVIVGDRKGHVGFGTGKAQEVPEAIRKAVEAGKKRMIKVPTVGTTIPHEVMGHYGSGNIMLKPAEAGSGVAAGGAVRIIMDLAGISDVTSKSLGSNTPINVIRATMDGLSKLKTREDVLKLRESAKSLED.

Residues 20-83 form the S5 DRBM domain; that stretch reads IEDQLVAINR…EAGKKRMIKV (64 aa).

Belongs to the universal ribosomal protein uS5 family. As to quaternary structure, part of the 30S ribosomal subunit. Contacts proteins S4 and S8.

In terms of biological role, with S4 and S12 plays an important role in translational accuracy. Located at the back of the 30S subunit body where it stabilizes the conformation of the head with respect to the body. The polypeptide is Small ribosomal subunit protein uS5 (Lactobacillus gasseri (strain ATCC 33323 / DSM 20243 / BCRC 14619 / CIP 102991 / JCM 1131 / KCTC 3163 / NCIMB 11718 / NCTC 13722 / AM63)).